Consider the following 547-residue polypeptide: T-complex protein 1 subunit gamma (547 aa).

Glycine 41 contacts ADP. ATP is bound at residue glycine 41. Aspartate 92 contributes to the Mg(2+) binding site. Glycine 93, threonine 94, threonine 95, serine 96, threonine 161, and lysine 162 together coordinate ADP. Residues glycine 93, threonine 94, and threonine 95 each coordinate ATP. Cysteine 365 and cysteine 371 are joined by a disulfide. ADP contacts are provided by glycine 410, glycine 481, glutamate 482, glutamate 496, and lysine 501. Residues glycine 410 and glycine 481 each contribute to the ATP site. An ATP-binding site is contributed by glutamate 496. Positions histidine 525–arginine 534 are enriched in basic and acidic residues. The segment at histidine 525–glutamate 547 is disordered. Positions glutamine 535–glutamate 547 are enriched in low complexity.

Belongs to the TCP-1 chaperonin family. In terms of assembly, component of the chaperonin-containing T-complex (TRiC), a hexadecamer composed of two identical back-to-back stacked rings enclosing a protein folding chamber. Each ring is made up of eight different subunits: TCP1/CCT1, CCT2, CCT3, CCT4, CCT5, CCT6A/CCT6, CCT7, CCT8.

It localises to the cytoplasm. It catalyses the reaction ATP + H2O = ADP + phosphate + H(+). In terms of biological role, component of the chaperonin-containing T-complex (TRiC), a molecular chaperone complex that assists the folding of actin, tubulin and other proteins upon ATP hydrolysis. This chain is T-complex protein 1 subunit gamma (cct3), found in Xenopus laevis (African clawed frog).